Consider the following 111-residue polypeptide: Large ribosomal subunit protein eL33z (111 aa).

This sequence belongs to the eukaryotic ribosomal protein eL33 family.

This is Large ribosomal subunit protein eL33z (RPL35AB) from Arabidopsis thaliana (Mouse-ear cress).